We begin with the raw amino-acid sequence, 381 residues long: Phosphatidyl-myo-inositol mannosyltransferase (381 aa).

GDP-alpha-D-mannose-binding residues include Tyr-9 and Gly-16. A 1,2-diacyl-sn-glycero-3-phospho-(1D-myo-inositol) contacts are provided by residues Gln-18, Phe-69–Asn-70, and Arg-75. Residues Arg-204, Arg-209–Lys-210, Leu-251–Asp-253, Arg-256, Glu-274–Ile-278, and Glu-282 each bind GDP-alpha-D-mannose.

This sequence belongs to the glycosyltransferase group 1 family. Glycosyltransferase 4 subfamily. Monomer. Mg(2+) is required as a cofactor.

Its subcellular location is the cell membrane. The catalysed reaction is a 1,2-diacyl-sn-glycero-3-phospho-(1D-myo-inositol) + GDP-alpha-D-mannose = a 1,2-diacyl-sn-glycero-3-phospho-[alpha-D-mannopyranosyl-(1&lt;-&gt;6)-D-myo-inositol] + GDP + H(+). Its pathway is phospholipid metabolism; phosphatidylinositol metabolism. Its function is as follows. Involved in the biosynthesis of phosphatidyl-myo-inositol mannosides (PIM) which are early precursors in the biosynthesis of lipomannans (LM) and lipoarabinomannans (LAM). Catalyzes the addition of a mannosyl residue from GDP-D-mannose (GDP-Man) to the position 2 of the carrier lipid phosphatidyl-myo-inositol (PI) to generate a phosphatidyl-myo-inositol bearing an alpha-1,2-linked mannose residue (PIM1). This is Phosphatidyl-myo-inositol mannosyltransferase from Propionibacterium freudenreichii subsp. shermanii (strain ATCC 9614 / DSM 4902 / CIP 103027 / NCIMB 8099 / CIRM-BIA1).